Reading from the N-terminus, the 21-residue chain is 78 kDa dihydrolipoyllysine-residue acetyltransferase component of pyruvate dehydrogenase complex (21 aa).

This sequence belongs to the 2-oxoacid dehydrogenase family. Forms a 60-polypeptide structural core. (R)-lipoate serves as cofactor.

It is found in the mitochondrion matrix. The catalysed reaction is N(6)-[(R)-dihydrolipoyl]-L-lysyl-[protein] + acetyl-CoA = N(6)-[(R)-S(8)-acetyldihydrolipoyl]-L-lysyl-[protein] + CoA. Functionally, the pyruvate dehydrogenase complex catalyzes the overall conversion of pyruvate to acetyl-CoA and CO(2). It contains multiple copies of three enzymatic components: pyruvate dehydrogenase (E1), dihydrolipoamide acetyltransferase (E2) and lipoamide dehydrogenase (E3). This Solanum tuberosum (Potato) protein is 78 kDa dihydrolipoyllysine-residue acetyltransferase component of pyruvate dehydrogenase complex.